The following is an 86-amino-acid chain: Cell division topological specificity factor (86 aa).

The protein belongs to the MinE family.

Functionally, prevents the cell division inhibition by proteins MinC and MinD at internal division sites while permitting inhibition at polar sites. This ensures cell division at the proper site by restricting the formation of a division septum at the midpoint of the long axis of the cell. The chain is Cell division topological specificity factor from Albidiferax ferrireducens (strain ATCC BAA-621 / DSM 15236 / T118) (Rhodoferax ferrireducens).